Consider the following 152-residue polypeptide: Aspartate 1-decarboxylase (152 aa).

The active-site Schiff-base intermediate with substrate; via pyruvic acid is serine 24. Serine 24 is subject to Pyruvic acid (Ser). Threonine 56 serves as a coordination point for substrate. The active-site Proton donor is the tyrosine 57. 72–74 (GAA) contributes to the substrate binding site.

It belongs to the PanD family. As to quaternary structure, heterooctamer of four alpha and four beta subunits. It depends on pyruvate as a cofactor. Is synthesized initially as an inactive proenzyme, which is activated by self-cleavage at a specific serine bond to produce a beta-subunit with a hydroxyl group at its C-terminus and an alpha-subunit with a pyruvoyl group at its N-terminus.

It localises to the cytoplasm. The enzyme catalyses L-aspartate + H(+) = beta-alanine + CO2. Its pathway is cofactor biosynthesis; (R)-pantothenate biosynthesis; beta-alanine from L-aspartate: step 1/1. In terms of biological role, catalyzes the pyruvoyl-dependent decarboxylation of aspartate to produce beta-alanine. The sequence is that of Aspartate 1-decarboxylase from Rhodospirillum centenum (strain ATCC 51521 / SW).